Consider the following 493-residue polypeptide: Probable cytochrome P450 6a13 (493 aa).

Cysteine 435 provides a ligand contact to heme.

This sequence belongs to the cytochrome P450 family. Requires heme as cofactor.

It is found in the endoplasmic reticulum membrane. The protein localises to the microsome membrane. May be involved in the metabolism of insect hormones and in the breakdown of synthetic insecticides. The chain is Probable cytochrome P450 6a13 (Cyp6a13) from Drosophila melanogaster (Fruit fly).